The following is a 236-amino-acid chain: MTAEFLSLLCLGLCLGYEDEKKNEKPPKPSLHAWPSSVVEAESNVTLKCQAHSQNVTFVLRKVNDSGYKQEQSSAENEAEFPFTDLKPKDAGRYFCAYKTTASHEWSESSEHLQLVVTDKHDELEAPSMKTDTRTIFVAIFSCISILLLFLSVFIIYRCSQHSSSSEESTKRTSHSKLPEQEAAEADLSNMERVSLSTADPQGVTYAELSTSALSEAASDTTQEPPGSHEYAALKV.

The first 16 residues, 1-16 (MTAEFLSLLCLGLCLG), serve as a signal peptide directing secretion. At 17 to 135 (YEDEKKNEKP…APSMKTDTRT (119 aa)) the chain is on the extracellular side. The Ig-like V-type domain maps to 27–114 (PKPSLHAWPS…EWSESSEHLQ (88 aa)). N-linked (GlcNAc...) asparagine glycans are attached at residues Asn-44 and Asn-55. A disulfide bond links Cys-49 and Cys-96. A helical transmembrane segment spans residues 136–156 (IFVAIFSCISILLLFLSVFII). Residues 157-236 (YRCSQHSSSS…GSHEYAALKV (80 aa)) are Cytoplasmic-facing. Residues 166-200 (SEESTKRTSHSKLPEQEAAEADLSNMERVSLSTAD) are disordered. 2 short sequence motifs (ITIM motif) span residues 204–209 (VTYAEL) and 229–234 (HEYAAL). The interval 215-236 (SEAASDTTQEPPGSHEYAALKV) is disordered.

Post-translationally, isoform 2 is N-glycosylated. As to expression, expressed on myeloid (neutrophils, eosinophils and monocytes) but not on lymphoid cells.

The protein resides in the membrane. It localises to the secreted. In terms of biological role, behaves as a cytokine, promoting IL17A secretion by CD4+ T-cells, and differentiation and activation of IL17 producing helper T-cells (TH17). Its function is as follows. Inhibitory immune receptor involved in the regulation of phagocytes. In Homo sapiens (Human), this protein is V-set and transmembrane domain-containing protein 1 (VSTM1).